We begin with the raw amino-acid sequence, 590 residues long: Aspartate--tRNA(Asp/Asn) ligase (590 aa).

Residue Glu-175 participates in L-aspartate binding. An aspartate region spans residues 199–202 (QQYK). The L-aspartate site is built by Arg-221 and His-450. Residue 221–223 (RDE) coordinates ATP. Glu-484 lines the ATP pocket. L-aspartate is bound at residue Arg-491. 536 to 539 (GVDR) contributes to the ATP binding site.

This sequence belongs to the class-II aminoacyl-tRNA synthetase family. Type 1 subfamily. As to quaternary structure, homodimer.

The protein localises to the cytoplasm. The enzyme catalyses tRNA(Asx) + L-aspartate + ATP = L-aspartyl-tRNA(Asx) + AMP + diphosphate. Functionally, aspartyl-tRNA synthetase with relaxed tRNA specificity since it is able to aspartylate not only its cognate tRNA(Asp) but also tRNA(Asn). Reaction proceeds in two steps: L-aspartate is first activated by ATP to form Asp-AMP and then transferred to the acceptor end of tRNA(Asp/Asn). The chain is Aspartate--tRNA(Asp/Asn) ligase from Bradyrhizobium sp. (strain ORS 278).